Consider the following 505-residue polypeptide: Trans-cinnamate 4-monooxygenase C4H2 (505 aa).

2 short sequence motifs (nuclear localization signal) span residues valine 161–asparagine 168 and glutamate 247–lysine 254. Residue cysteine 447 participates in heme binding.

The protein belongs to the cytochrome P450 family. It depends on heme as a cofactor.

It localises to the nucleus. It catalyses the reaction (E)-cinnamate + reduced [NADPH--hemoprotein reductase] + O2 = (E)-4-coumarate + oxidized [NADPH--hemoprotein reductase] + H2O + H(+). The protein operates within phenylpropanoid metabolism; trans-4-coumarate biosynthesis; trans-4-coumarate from trans-cinnamate: step 1/1. In terms of biological role, component of the floral volatile benzenoid/phenylpropanoid (FVBP) biosynthetic pathway that controls carbon flux to pigments essential for pollination or UV protection, to numerous pytoalexins synthesized by plants when challenged by pathogens, and to lignins. The protein is Trans-cinnamate 4-monooxygenase C4H2 of Petunia hybrida (Petunia).